The chain runs to 292 residues: Undecaprenyl-diphosphatase (292 aa).

The next 7 helical transmembrane spans lie at 1-21, 46-66, 88-108, 114-134, 192-212, 225-245, and 253-273; these read MSLVSAALFGLVQALTEFLPV, FVTIIQAGTTLAVLIYFRADI, ARLGWYILLGTLPAALAGKLL, ALGNWVIAGSLVGLGLVLLAA, FLLSVPITLAAGAYKLWSTVP, VVGTVVSAVAGYLVIDWLLAW, and VFVVWRIAAGAAIAALILSGV.

It belongs to the UppP family.

It is found in the cell inner membrane. The enzyme catalyses di-trans,octa-cis-undecaprenyl diphosphate + H2O = di-trans,octa-cis-undecaprenyl phosphate + phosphate + H(+). Catalyzes the dephosphorylation of undecaprenyl diphosphate (UPP). Confers resistance to bacitracin. This is Undecaprenyl-diphosphatase from Anaeromyxobacter dehalogenans (strain 2CP-C).